The chain runs to 360 residues: Histidinol-phosphate aminotransferase (360 aa).

Lys-211 is modified (N6-(pyridoxal phosphate)lysine).

It belongs to the class-II pyridoxal-phosphate-dependent aminotransferase family. Histidinol-phosphate aminotransferase subfamily. Homodimer. It depends on pyridoxal 5'-phosphate as a cofactor.

It carries out the reaction L-histidinol phosphate + 2-oxoglutarate = 3-(imidazol-4-yl)-2-oxopropyl phosphate + L-glutamate. The protein operates within amino-acid biosynthesis; L-histidine biosynthesis; L-histidine from 5-phospho-alpha-D-ribose 1-diphosphate: step 7/9. In Sodalis glossinidius (strain morsitans), this protein is Histidinol-phosphate aminotransferase.